Here is a 445-residue protein sequence, read N- to C-terminus: Phosphoglucosamine mutase (445 aa).

The Phosphoserine intermediate role is filled by S99. The Mg(2+) site is built by S99, D242, D244, and D246. S99 carries the post-translational modification Phosphoserine.

Belongs to the phosphohexose mutase family. Mg(2+) serves as cofactor. Post-translationally, activated by phosphorylation.

It catalyses the reaction alpha-D-glucosamine 1-phosphate = D-glucosamine 6-phosphate. Its function is as follows. Catalyzes the conversion of glucosamine-6-phosphate to glucosamine-1-phosphate. This Campylobacter lari (strain RM2100 / D67 / ATCC BAA-1060) protein is Phosphoglucosamine mutase.